We begin with the raw amino-acid sequence, 285 residues long: N(G),N(G)-dimethylarginine dimethylaminohydrolase 1 (285 aa).

Residue Ala-2 is modified to N-acetylalanine. Leu-30 contacts substrate. Phosphoserine is present on Ser-33. The substrate site is built by Asp-73, Glu-78, Asp-79, Arg-98, and Arg-145. Catalysis depends on His-173, which acts as the Proton donor. At Cys-222 the chain carries S-nitrosocysteine. Residue Val-268 coordinates substrate. Cys-274 bears the S-nitrosocysteine mark. Cys-274 acts as the Nucleophile in catalysis. Cys-274 lines the Zn(2+) pocket.

Belongs to the DDAH family. Monomer. In terms of tissue distribution, detected in red blood cells (at protein level). Widely distributed, high amounts found in kidney, brain, aorta and pancreas.

It carries out the reaction N(omega),N(omega)-dimethyl-L-arginine + H2O = dimethylamine + L-citrulline. The catalysed reaction is N(omega)-methyl-L-arginine + H2O = L-citrulline + methylamine. Its activity is regulated as follows. Inhibited by zinc ions. Hydrolyzes N(G),N(G)-dimethyl-L-arginine (ADMA) and N(G)-monomethyl-L-arginine (MMA) which act as inhibitors of NOS. Has therefore a role in the regulation of nitric oxide generation. The protein is N(G),N(G)-dimethylarginine dimethylaminohydrolase 1 (Ddah1) of Rattus norvegicus (Rat).